Here is a 363-residue protein sequence, read N- to C-terminus: UDP-3-O-acylglucosamine N-acyltransferase (363 aa).

The active-site Proton acceptor is histidine 252.

This sequence belongs to the transferase hexapeptide repeat family. LpxD subfamily. Homotrimer.

It carries out the reaction a UDP-3-O-[(3R)-3-hydroxyacyl]-alpha-D-glucosamine + a (3R)-hydroxyacyl-[ACP] = a UDP-2-N,3-O-bis[(3R)-3-hydroxyacyl]-alpha-D-glucosamine + holo-[ACP] + H(+). The protein operates within bacterial outer membrane biogenesis; LPS lipid A biosynthesis. Its function is as follows. Catalyzes the N-acylation of UDP-3-O-acylglucosamine using 3-hydroxyacyl-ACP as the acyl donor. Is involved in the biosynthesis of lipid A, a phosphorylated glycolipid that anchors the lipopolysaccharide to the outer membrane of the cell. The polypeptide is UDP-3-O-acylglucosamine N-acyltransferase (Cupriavidus necator (strain ATCC 17699 / DSM 428 / KCTC 22496 / NCIMB 10442 / H16 / Stanier 337) (Ralstonia eutropha)).